We begin with the raw amino-acid sequence, 182 residues long: Peptidoglycan-recognition protein SB2 (182 aa).

An N-terminal signal peptide occupies residues 1–17; the sequence is MKLQLALVLCGLTLALG. Positions 40-165 constitute an N-acetylmuramoyl-L-alanine amidase domain; that stretch reads PVRLIIIHHT…CQTKATACPG (126 aa). His-47 is a Zn(2+) binding site. Cys-54 and Cys-60 are disulfide-bonded. An N-linked (GlcNAc...) asparagine glycan is attached at Asn-149. Zn(2+) is bound by residues His-155 and Cys-163.

Belongs to the N-acetylmuramoyl-L-alanine amidase 2 family. Zn(2+) is required as a cofactor.

The protein resides in the secreted. It catalyses the reaction Hydrolyzes the link between N-acetylmuramoyl residues and L-amino acid residues in certain cell-wall glycopeptides.. N-acetylmuramyl-L-alanine amidase involved in innate immunity by degrading bacterial peptidoglycans (PGN). Probably plays a scavenger role by digesting biologically active PGN into biologically inactive fragments. Has no direct bacteriolytic activity. The chain is Peptidoglycan-recognition protein SB2 (PGRP-SB2) from Drosophila melanogaster (Fruit fly).